Here is a 103-residue protein sequence, read N- to C-terminus: Protein Rev (103 aa).

Phosphoserine; by host CK2 is present on S5. The interval 17 to 25 (IIKILYQSN) is homomultimerization. Disordered regions lie at residues 24–49 (SNPC…RRQA) and 82–103 (IRDP…TKDN). Positions 33 to 49 (SRNARKNRRRRWRRRQA) match the Nuclear localization signal and RNA-binding (RRE) motif. The segment covering 35–48 (NARKNRRRRWRRRQ) has biased composition (basic residues). The Nuclear export signal and binding to XPO1 signature appears at 72 to 83 (VDLPPLEQLNIR).

Belongs to the HIV-1 REV protein family. In terms of assembly, homomultimer; when bound to the RRE. Multimeric assembly is essential for activity and may involve XPO1. Binds to human KPNB1, XPO1, TNPO1, RANBP5 and IPO7. Interacts with the viral Integrase. Interacts with human KHDRBS1. Interacts with human NAP1; this interaction decreases Rev multimerization and stimulates its activity. Interacts with human DEAD-box helicases DDX3 and DDX24; these interactions may serve for viral RNA export to the cytoplasm and packaging, respectively. Interacts with human PSIP1; this interaction may inhibit HIV-1 DNA integration by promoting dissociation of the Integrase-LEDGF/p75 complex. In terms of processing, asymmetrically arginine dimethylated at one site by host PRMT6. Methylation impairs the RNA-binding activity and export of viral RNA from the nucleus to the cytoplasm. Post-translationally, phosphorylated by protein kinase CK2. Presence of, and maybe binding to the N-terminus of the regulatory beta subunit of CK2 is necessary for CK2-mediated Rev's phosphorylation.

It localises to the host nucleus. It is found in the host nucleolus. The protein localises to the host cytoplasm. Functionally, escorts unspliced or incompletely spliced viral pre-mRNAs (late transcripts) out of the nucleus of infected cells. These pre-mRNAs carry a recognition sequence called Rev responsive element (RRE) located in the env gene, that is not present in fully spliced viral mRNAs (early transcripts). This function is essential since most viral proteins are translated from unspliced or partially spliced pre-mRNAs which cannot exit the nucleus by the pathway used by fully processed cellular mRNAs. Rev itself is translated from a fully spliced mRNA that readily exits the nucleus. Rev's nuclear localization signal (NLS) binds directly to KPNB1/Importin beta-1 without previous binding to KPNA1/Importin alpha-1. KPNB1 binds to the GDP bound form of RAN (Ran-GDP) and targets Rev to the nucleus. In the nucleus, the conversion from Ran-GDP to Ran-GTP dissociates Rev from KPNB1 and allows Rev's binding to the RRE in viral pre-mRNAs. Rev multimerization on the RRE via cooperative assembly exposes its nuclear export signal (NES) to the surface. Rev can then form a complex with XPO1/CRM1 and Ran-GTP, leading to nuclear export of the complex. Conversion from Ran-GTP to Ran-GDP mediates dissociation of the Rev/RRE/XPO1/RAN complex, so that Rev can return to the nucleus for a subsequent round of export. Beside KPNB1, also seems to interact with TNPO1/Transportin-1, RANBP5/IPO5 and IPO7/RANBP7 for nuclear import. The nucleoporin-like HRB/RIP is an essential cofactor that probably indirectly interacts with Rev to release HIV RNAs from the perinuclear region to the cytoplasm. The chain is Protein Rev from Human immunodeficiency virus type 1 group O (isolate MVP5180) (HIV-1).